The chain runs to 437 residues: Enolase 2 (437 aa).

A Glycyl lysine isopeptide (Lys-Gly) (interchain with G-Cter in ubiquitin) cross-link involves residue K60. S138 carries the phosphoserine modification. H160 is an active-site residue. S188 carries the phosphoserine modification. K243 is covalently cross-linked (Glycyl lysine isopeptide (Lys-Gly) (interchain with G-Cter in ubiquitin)). Positions 247 and 296 each coordinate Mg(2+). At T313 the chain carries Phosphothreonine. D321 is a Mg(2+) binding site. A Phosphothreonine modification is found at T324. K358 participates in a covalent cross-link: Glycyl lysine isopeptide (Lys-Gly) (interchain with G-Cter in ubiquitin).

The protein belongs to the enolase family. As to quaternary structure, homodimer. Mg(2+) serves as cofactor.

The protein localises to the cytoplasm. It carries out the reaction (2R)-2-phosphoglycerate = phosphoenolpyruvate + H2O. It functions in the pathway carbohydrate degradation; glycolysis; pyruvate from D-glyceraldehyde 3-phosphate: step 4/5. The protein is Enolase 2 (ENO2) of Saccharomyces cerevisiae (strain ATCC 204508 / S288c) (Baker's yeast).